Here is a 331-residue protein sequence, read N- to C-terminus: GTP 3',8-cyclase 2 (331 aa).

In terms of domain architecture, Radical SAM core spans 9–234 (PFGRRITYLR…PSLARSGGPS (226 aa)). GTP is bound at residue Arg18. [4Fe-4S] cluster-binding residues include Cys25 and Cys29. Tyr31 contacts S-adenosyl-L-methionine. A [4Fe-4S] cluster-binding site is contributed by Cys32. Residue Arg67 coordinates GTP. Residue Gly71 participates in S-adenosyl-L-methionine binding. Thr98 serves as a coordination point for GTP. Ser122 provides a ligand contact to S-adenosyl-L-methionine. Lys159 is a GTP binding site. Met193 serves as a coordination point for S-adenosyl-L-methionine. [4Fe-4S] cluster contacts are provided by Cys257 and Cys260. 262–264 (RVR) serves as a coordination point for GTP. Cys274 lines the [4Fe-4S] cluster pocket.

It belongs to the radical SAM superfamily. MoaA family. As to quaternary structure, monomer and homodimer. The cofactor is [4Fe-4S] cluster.

It carries out the reaction GTP + AH2 + S-adenosyl-L-methionine = (8S)-3',8-cyclo-7,8-dihydroguanosine 5'-triphosphate + 5'-deoxyadenosine + L-methionine + A + H(+). It functions in the pathway cofactor biosynthesis; molybdopterin biosynthesis. Its function is as follows. Catalyzes the cyclization of GTP to (8S)-3',8-cyclo-7,8-dihydroguanosine 5'-triphosphate. This chain is GTP 3',8-cyclase 2 (moaA2), found in Pseudomonas aeruginosa (strain ATCC 15692 / DSM 22644 / CIP 104116 / JCM 14847 / LMG 12228 / 1C / PRS 101 / PAO1).